Reading from the N-terminus, the 493-residue chain is Zinc finger CCCH domain-containing protein 34 (493 aa).

C3H1-type zinc fingers lie at residues 14-43, 45-71, and 91-118; these read RRCN…HADG, RFNR…HPPL, and VKAA…HEPL. The segment at 397–477 is disordered; that stretch reads MGECPQPANH…SFSDDFEGPK (81 aa). A compositionally biased stretch (basic residues) spans 409–420; sequence FRGRRKKNRGKQ. Positions 452–468 are enriched in polar residues; it reads SNSSFSHSTACTPNVRS.

This chain is Zinc finger CCCH domain-containing protein 34, found in Oryza sativa subsp. japonica (Rice).